A 158-amino-acid polypeptide reads, in one-letter code: NADPH-dependent 7-cyano-7-deazaguanine reductase (158 aa).

Cys-56 functions as the Thioimide intermediate in the catalytic mechanism. Residue Asp-63 is the Proton donor of the active site. Substrate-binding positions include 78–80 and 97–98; these read VES and HE.

This sequence belongs to the GTP cyclohydrolase I family. QueF type 1 subfamily.

It localises to the cytoplasm. It catalyses the reaction 7-aminomethyl-7-carbaguanine + 2 NADP(+) = 7-cyano-7-deazaguanine + 2 NADPH + 3 H(+). It participates in tRNA modification; tRNA-queuosine biosynthesis. Functionally, catalyzes the NADPH-dependent reduction of 7-cyano-7-deazaguanine (preQ0) to 7-aminomethyl-7-deazaguanine (preQ1). This chain is NADPH-dependent 7-cyano-7-deazaguanine reductase, found in Rhodopseudomonas palustris (strain HaA2).